The primary structure comprises 781 residues: MSISLIQPERDLFSYQPYWAECYGTAPFLPMSREEMDILGWDSCDIIVITGDAYVDHPSFGMAIVGRMLEAQGFRVGIIAQPDWTNKHDFMRLGEPNLFFGVTAGNMDSMINRYTADRKLRHDDAYTPDNQSGKRPDRATLVYSQRCKEAYSHVPVLLGGIEASLRRIAHYDYWSDTVRRSVIVDAKADMLVYGNGERPLVEVAHRLAAGEKITDIQDVRNTVVMRKTPLPGWSGVDSTRLDKPGRIEAIPNPYGEDLPCATDDISIPEAKPITVRAAKPKPWEKTYVLLPSYEKVKADKVLYAHTSRILHHETNPGCARALMQKHGDRYIWINPPAIPLSTEEMDSVFALPYQRVPHPSYGKSPIPAYDMIRFSINIMRGCYGGCSFCSITEHEGRIIQSRSEDSIIREIEEIRDKVPGFTGIISDLGGPTANMYMLRCQSPRAEQTCRRASCVYPEICPHMDTNHQPTISLYRRARDLKGIKKILIASGVRYDLAVEDPRYIKELASHHVGGYLKIAPEHTEEGPLSKMMKPGMGSYQRFKELFDTYSKQAGKEQYLIPYFISAHPGTEDKDMVNLALWLKKNRFRLDQVQNFYPSPLANSTTMYYTGKNPLAKVDYKSEEVVVPKGDRQRRLHKALLRYHDPANWPMLRSALEDMGLQHLIGARRECLVPAPTLEEQREARRALRHHTPALTKHTSITRQRQPSNRAPAASAGKKAPTVANGTSSAHSTSANQSTSANQSTSAAHSTLATKKSAGKTGVNKAAVNKPSAGSRGKNRQH.

The Radical SAM core domain maps to 368–646; sequence AYDMIRFSIN…KALLRYHDPA (279 aa). Cys-382, Cys-386, and Cys-389 together coordinate [4Fe-4S] cluster. A disordered region spans residues 681 to 781; that stretch reads REARRALRHH…AGSRGKNRQH (101 aa). Polar residues predominate over residues 696-708; sequence KHTSITRQRQPSN. The span at 726-750 shows a compositional bias: low complexity; the sequence is TSSAHSTSANQSTSANQSTSAAHST.

Belongs to the UPF0313 family. [4Fe-4S] cluster is required as a cofactor.

This chain is Putative UPF0313 protein YPO0674/y3502/YP_2990, found in Yersinia pestis.